A 246-amino-acid polypeptide reads, in one-letter code: Small ribosomal subunit protein uS2 (246 aa).

The protein belongs to the universal ribosomal protein uS2 family.

The chain is Small ribosomal subunit protein uS2 from Saccharophagus degradans (strain 2-40 / ATCC 43961 / DSM 17024).